We begin with the raw amino-acid sequence, 88 residues long: Small ribosomal subunit protein uS17 (88 aa).

This sequence belongs to the universal ribosomal protein uS17 family. In terms of assembly, part of the 30S ribosomal subunit.

One of the primary rRNA binding proteins, it binds specifically to the 5'-end of 16S ribosomal RNA. The sequence is that of Small ribosomal subunit protein uS17 from Nitratidesulfovibrio vulgaris (strain ATCC 29579 / DSM 644 / CCUG 34227 / NCIMB 8303 / VKM B-1760 / Hildenborough) (Desulfovibrio vulgaris).